A 212-amino-acid polypeptide reads, in one-letter code: Protein-L-isoaspartate O-methyltransferase (212 aa).

Ser60 is a catalytic residue.

The protein belongs to the methyltransferase superfamily. L-isoaspartyl/D-aspartyl protein methyltransferase family.

It is found in the cytoplasm. It catalyses the reaction [protein]-L-isoaspartate + S-adenosyl-L-methionine = [protein]-L-isoaspartate alpha-methyl ester + S-adenosyl-L-homocysteine. Catalyzes the methyl esterification of L-isoaspartyl residues in peptides and proteins that result from spontaneous decomposition of normal L-aspartyl and L-asparaginyl residues. It plays a role in the repair and/or degradation of damaged proteins. The protein is Protein-L-isoaspartate O-methyltransferase of Pseudomonas putida (strain ATCC 700007 / DSM 6899 / JCM 31910 / BCRC 17059 / LMG 24140 / F1).